Consider the following 851-residue polypeptide: Putative mediator of RNA polymerase II transcription subunit 15 (851 aa).

Disordered regions lie at residues 79-212 and 299-368; these read AQAG…NTVY and QQQQ…NNTH. The span at 98 to 141 shows a compositional bias: low complexity; sequence ITPLIQQPITPVQQQVPPQKQPQPVYNQQQNQQQNQNQYTTTYP. Residues 145–154 are compositionally biased toward polar residues; it reads TPQQSNTPPI. Residues 155-212 show a composition bias toward low complexity; the sequence is SNNNSNNNSNNNLNNNNNNNINNNNNNNNNNNNNNNNNNNNNNNNNNNNNNNNNNTVY. Residues 231–307 are a coiled coil; the sequence is QLYLQQQQQL…QQQQQQQHQQ (77 aa). The segment covering 308-319 has biased composition (polar residues); sequence PVQMPSGVTTNK. Positions 320 to 358 are enriched in low complexity; that stretch reads QSPQPQNTPLTPQQQQQLLAAQQSHAQAQANQNQQLQNP. Positions 359–368 are enriched in polar residues; the sequence is KRISSTNNTH. Residues 790–827 adopt a coiled-coil conformation; it reads LKDLESKMNKEFENSNDLNQLNNNINNNNNNNNSFSDN.

This sequence belongs to the Mediator complex subunit 15 family. As to quaternary structure, component of the Mediator complex.

Its subcellular location is the cytoplasm. The protein resides in the nucleus. In terms of biological role, component of the Mediator complex, a coactivator involved in the regulated transcription of nearly all RNA polymerase II-dependent genes. Mediator functions as a bridge to convey information from gene-specific regulatory proteins to the basal RNA polymerase II transcription machinery. Mediator is recruited to promoters by direct interactions with regulatory proteins and serves as a scaffold for the assembly of a functional preinitiation complex with RNA polymerase II and the general transcription factors. The polypeptide is Putative mediator of RNA polymerase II transcription subunit 15 (med15) (Dictyostelium discoideum (Social amoeba)).